The primary structure comprises 188 residues: uncharacterized protein (188 aa).

This is an uncharacterized protein from Saccharomyces cerevisiae (strain ATCC 204508 / S288c) (Baker's yeast).